The primary structure comprises 309 residues: Mitochondrial brown fat uncoupling protein 1 (309 aa).

Topologically, residues 1 to 10 are mitochondrial intermembrane; that stretch reads MLRAPGSDAP. Residues 11–32 traverse the membrane as a helical segment; that stretch reads PTLSVRIAAAAGAACLADMITF. Solcar repeat units follow at residues 11–104, 113–203, and 212–297; these read PTLS…VREW, ASLG…MKEA, and DDLP…LKRE. Residues 33–75 lie on the Mitochondrial matrix side of the membrane; that stretch reads PLDTAKVRLQIQGEGQGQPPRAPRYRGVLGTVATLARTEGLQK. Fatty acid 16:0 is bound at residue R58. The helical transmembrane segment at 76–98 threads the bilayer; that stretch reads LYSGLPAGLQRQVGFASLRIGLY. The Mitochondrial intermembrane portion of the chain corresponds to 99-118; sequence DSVREWLSPGQGAAASLGSR. Residues 119–135 traverse the membrane as a helical segment; it reads ISAGVMTGGAAVFIGQP. Topologically, residues 136-180 are mitochondrial matrix; the sequence is TEVVKVRLQAQSHLHGRKPRYTGTYNAYRIIATTEGLTGLWKGTT. A helical transmembrane segment spans residues 181 to 197; that stretch reads PNLMRNVIINCTELVTY. Over 198 to 214 the chain is Mitochondrial intermembrane; the sequence is DLMKEALVKNHLLADDL. The helical transmembrane segment at 215–234 threads the bilayer; the sequence is PCHFLSALVAGFCTTVLSSP. Residues 235-268 are Mitochondrial matrix-facing; it reads VDVVKTRFVNSVPEQYTSVPNCAMTMLTKEGPLA. Residue C256 is modified to Cysteine sulfenic acid (-SOH). Residues 269–291 traverse the membrane as a helical segment; that stretch reads FFKGFVPSFLRLGSWNVIMFVCF. A fatty acid 16:0-binding site is contributed by K271. Residues 292–309 are Mitochondrial intermembrane-facing; it reads EQLKRELMKSGRTVDCAT.

This sequence belongs to the mitochondrial carrier (TC 2.A.29) family. In terms of assembly, most probably functions as a monomer. Binds one purine nucleotide per monomer. However, has also been suggested to function as a homodimer or a homotetramer. Tightly associates with cardiolipin in the mitochondrion inner membrane; may stabilize and regulate its activity. In terms of processing, may undergo sulfenylation upon cold exposure. May increase the sensitivity of UCP1 thermogenic function to the activation by noradrenaline probably through structural effects. May undergo ubiquitin-mediated proteasomal degradation.

Its subcellular location is the mitochondrion inner membrane. The enzyme catalyses H(+)(in) = H(+)(out). With respect to regulation, has no constitutive proton transporter activity and has to be activated by long-chain fatty acids/LCFAs. Inhibited by purine nucleotides. Both purine nucleotides and LCFAs bind the cytosolic side of the transporter and directly compete to activate or inhibit it. Activated by noradrenaline and reactive oxygen species. Despite lacking canonical translational encoding for selenocysteine, a small pool of the protein has been observed to selectively incorporate selenocysteine at 'Cys-256'. Selenocysteine-modified protein is highly sensitive to redox modification and may constitute a pool of protein highly sensitive to activation by elevated levels of reactive oxygen species (ROS). Functionally, mitochondrial protein responsible for thermogenic respiration, a specialized capacity of brown adipose tissue and beige fat that participates in non-shivering adaptive thermogenesis to temperature and diet variations and more generally to the regulation of energy balance. Functions as a long-chain fatty acid/LCFA and proton symporter, simultaneously transporting one LCFA and one proton through the inner mitochondrial membrane. However, LCFAs remaining associated with the transporter via their hydrophobic tails, it results in an apparent transport of protons activated by LCFAs. Thereby, dissipates the mitochondrial proton gradient and converts the energy of substrate oxydation into heat instead of ATP. Regulates the production of reactive oxygen species/ROS by mitochondria. This chain is Mitochondrial brown fat uncoupling protein 1, found in Canis lupus familiaris (Dog).